Consider the following 175-residue polypeptide: R-phycoerythrin subunit beta (175 aa).

(2R,3E)-phycoerythrobilin is bound at residue cysteine 82.

Belongs to the phycobiliprotein family. As to quaternary structure, homodimer. Post-translationally, contains one covalently linked phycoerythrobilin chromophore.

In terms of biological role, green-light absorbing phycoerythrin of unknown function. The polypeptide is R-phycoerythrin subunit beta (cpeB) (Prochlorococcus marinus subsp. pastoris (strain CCMP1986 / NIES-2087 / MED4)).